Consider the following 124-residue polypeptide: Protein MGF 110-4L (124 aa).

A signal peptide spans 1-28 (MLVIFLGILGLLANQVLGLPTQAGGHLR). An N-linked (GlcNAc...) asparagine; by host glycan is attached at Asn64. The short motif at 121 to 124 (KEDL) is the Prevents secretion from ER element.

Belongs to the asfivirus MGF 110 family.

It localises to the virion. It is found in the host endoplasmic reticulum-Golgi intermediate compartment. Functionally, causes the redistribution of lumenal ER protein to an enlarged ERGIC compartment. The sequence is that of Protein MGF 110-4L from African swine fever virus (strain Badajoz 1971 Vero-adapted) (Ba71V).